We begin with the raw amino-acid sequence, 331 residues long: Protein PER1 homolog (331 aa).

The first 24 residues, 1-24 (MRVLRNFTIFFLFTALSLFRQISA), serve as a signal peptide directing secretion. Residues 25 to 100 (SAGDLHPVYV…QYHGKWYFIR (76 aa)) are Lumenal-facing. A helical membrane pass occupies residues 101 to 121 (VFGIQELFSVFFSMLNFMIHY). Over 122 to 139 (NGYHIMRRCIPDEHPAKR) the chain is Cytoplasmic. The helical transmembrane segment at 140–160 (LCLSWAIVGMNAWVWSSVFHI) threads the bilayer. Topologically, residues 161–168 (RDTPITEK) are lumenal. Residues 169-189 (LDYFSAGAFVLFGSYCTLILM) form a helical membrane-spanning segment. Residues 190–199 (LRLDQLPGGK) lie on the Cytoplasmic side of the membrane. The chain crosses the membrane as a helical span at residues 200–220 (LLCWIIGVIFIAAFIAHVSYL). Residues 221–232 (SFYSFDYGYNMK) lie on the Lumenal side of the membrane. Residues 233–250 (ANVAVGLVQNILWYYYSW) form a helical membrane-spanning segment. At 251 to 263 (SNRNSGLYWTRWP) the chain is on the cytoplasmic side. The chain crosses the membrane as a helical span at residues 264–284 (AYIVTSLMLATSLELFDFSPI). At 285-289 (ANLID) the chain is on the lumenal side. The chain crosses the membrane as a helical span at residues 290-310 (AHALWHLSTVPITHYLYGFVV). At 311 to 331 (RKCSYDLTKGTFKIKAYDSSR) the chain is on the cytoplasmic side.

The protein belongs to the PGAP3/PER1 family.

The protein resides in the endoplasmic reticulum membrane. It localises to the vacuole membrane. Its function is as follows. Involved in the lipid remodeling steps of GPI-anchor maturation. Lipid remodeling steps consist in the generation of 2 saturated fatty chains at the sn-2 position of GPI-anchors proteins. Required for phospholipase A2 activity that removes an acyl-chain at the sn-2 position of GPI-anchors during the remodeling of GPI. Required for efficient transport of GPI-anchor proteins. The chain is Protein PER1 homolog from Schizosaccharomyces pombe (strain 972 / ATCC 24843) (Fission yeast).